A 1457-amino-acid polypeptide reads, in one-letter code: Ras guanine nucleotide exchange factor C (1457 aa).

An RCC1 1 repeat occupies 1 to 55 (MSVFTFGHGSNGALGLGKITDDTCPTPQKVNYFTEIDKRVKKVACGSYHTVFVTD). Disordered stretches follow at residues 75-196 (FYTS…PLLN), 209-264 (HYES…RINK), 282-313 (EQQQ…DEDP), and 376-404 (QQQL…SLQT). 2 stretches are compositionally biased toward low complexity: residues 83–121 (TTTT…KIVN) and 134–158 (SNTT…LPPT). Basic and acidic residues-rich tracts occupy residues 171–188 (IKLD…ELIQ) and 209–224 (HYES…KDNE). Residues 225-237 (NENEEDEDDDDDD) show a composition bias toward acidic residues. Basic and acidic residues predominate over residues 238–249 (STIRQNEDKESS). Low complexity-rich tracts occupy residues 283 to 292 (QQQQPQQPQQ) and 376 to 403 (QQQL…SSLQ). 4 RCC1 repeats span residues 351-401 (GGNV…SSSS), 432-483 (WGEL…CYTE), 485-549 (GKMY…VLTQ), and 590-647 (SGEV…ALVE). A DH domain is found at 650-971 (PKTKLALQLV…QVLLERMNQN (322 aa)). A compositionally biased stretch (low complexity) spans 703-715 (LPPSLKGLSGGLP). A disordered region spans residues 703–762 (LPPSLKGLSGGLPDNANNTIKNGKDKDNHHNGDSNGHHSNGHYHGNGNNGNNSITTSNSI). Positions 724-738 (NGKDKDNHHNGDSNG) are enriched in basic and acidic residues. A compositionally biased stretch (low complexity) spans 739 to 762 (HHSNGHYHGNGNNGNNSITTSNSI). The N-terminal Ras-GEF domain occupies 989–1109 (GNPQIMGGSL…SVSQIKLQYF (121 aa)). Positions 1127-1210 (LTQNEITTPP…NNNNNNNNLT (84 aa)) are disordered. Residues 1138–1211 (LQIQNNNQNN…NNNNNNNLTN (74 aa)) are a coiled coil. Positions 1142–1210 (NNNQNNNLEN…NNNNNNNNLT (69 aa)) are enriched in low complexity. The region spanning 1232-1454 (QPIEVAQTLT…DDKQAQKISS (223 aa)) is the Ras-GEF domain.

Promotes the exchange of Ras-bound GDP by GTP. In Dictyostelium discoideum (Social amoeba), this protein is Ras guanine nucleotide exchange factor C (gefC).